A 91-amino-acid polypeptide reads, in one-letter code: PqqA binding protein 1 (91 aa).

The protein belongs to the PqqD family. In terms of assembly, monomer. Interacts with PqqE.

The protein operates within cofactor biosynthesis; pyrroloquinoline quinone biosynthesis. Functionally, functions as a PqqA binding protein and presents PqqA to PqqE, in the pyrroloquinoline quinone (PQQ) biosynthetic pathway. The chain is PqqA binding protein 1 (pqqD1) from Pseudomonas putida (strain ATCC 47054 / DSM 6125 / CFBP 8728 / NCIMB 11950 / KT2440).